The following is a 200-amino-acid chain: Recombination protein RecR (200 aa).

Residues 57–72 form a C4-type zinc finger; it reads CSECRTFTEEDTCAIC. The Toprim domain occupies 81 to 176; sequence GELCIVESPA…SASRIAHGVP (96 aa).

The protein belongs to the RecR family.

In terms of biological role, may play a role in DNA repair. It seems to be involved in an RecBC-independent recombinational process of DNA repair. It may act with RecF and RecO. In Aliivibrio salmonicida (strain LFI1238) (Vibrio salmonicida (strain LFI1238)), this protein is Recombination protein RecR.